The chain runs to 104 residues: Large ribosomal subunit protein uL24 (104 aa).

This sequence belongs to the universal ribosomal protein uL24 family. As to quaternary structure, part of the 50S ribosomal subunit.

Functionally, one of two assembly initiator proteins, it binds directly to the 5'-end of the 23S rRNA, where it nucleates assembly of the 50S subunit. One of the proteins that surrounds the polypeptide exit tunnel on the outside of the subunit. The sequence is that of Large ribosomal subunit protein uL24 from Buchnera aphidicola subsp. Acyrthosiphon pisum (strain 5A).